A 458-amino-acid chain; its full sequence is Translation initiation factor eIF2B subunit gamma (458 aa).

A Phosphoserine modification is found at serine 291.

The protein belongs to the eIF-2B gamma/epsilon subunits family. In terms of assembly, component of the translation initiation factor 2B (eIF2B) complex which is a heterodecamer of two sets of five different subunits: alpha, beta, gamma, delta and epsilon. Subunits alpha, beta and delta comprise a regulatory subcomplex and subunits epsilon and gamma comprise a catalytic subcomplex. Within the complex, the hexameric regulatory complex resides at the center, with the two heterodimeric catalytic subcomplexes bound on opposite sides.

The protein localises to the cytoplasm. It localises to the cytosol. Acts as a component of the translation initiation factor 2B (eIF2B) complex, which catalyzes the exchange of GDP for GTP on the eukaryotic initiation factor 2 (eIF2) complex gamma subunit. Its guanine nucleotide exchange factor activity is repressed when bound to eIF2 complex phosphorylated on the alpha subunit, thereby limiting the amount of methionyl-initiator methionine tRNA available to the ribosome and consequently global translation is repressed. This is Translation initiation factor eIF2B subunit gamma (tif223) from Schizosaccharomyces pombe (strain 972 / ATCC 24843) (Fission yeast).